Consider the following 236-residue polypeptide: Phosphoribosylaminoimidazole-succinocarboxamide synthase (236 aa).

Belongs to the SAICAR synthetase family.

The enzyme catalyses 5-amino-1-(5-phospho-D-ribosyl)imidazole-4-carboxylate + L-aspartate + ATP = (2S)-2-[5-amino-1-(5-phospho-beta-D-ribosyl)imidazole-4-carboxamido]succinate + ADP + phosphate + 2 H(+). It participates in purine metabolism; IMP biosynthesis via de novo pathway; 5-amino-1-(5-phospho-D-ribosyl)imidazole-4-carboxamide from 5-amino-1-(5-phospho-D-ribosyl)imidazole-4-carboxylate: step 1/2. In Pseudomonas paraeruginosa (strain DSM 24068 / PA7) (Pseudomonas aeruginosa (strain PA7)), this protein is Phosphoribosylaminoimidazole-succinocarboxamide synthase.